A 70-amino-acid polypeptide reads, in one-letter code: Small ribosomal subunit protein bS21 (70 aa).

This sequence belongs to the bacterial ribosomal protein bS21 family.

This is Small ribosomal subunit protein bS21 from Azoarcus sp. (strain BH72).